Here is a 731-residue protein sequence, read N- to C-terminus: 1,4-alpha-glucan branching enzyme GlgB (731 aa).

Catalysis depends on Asp408, which acts as the Nucleophile. Catalysis depends on Glu461, which acts as the Proton donor.

The protein belongs to the glycosyl hydrolase 13 family. GlgB subfamily. Monomer.

It catalyses the reaction Transfers a segment of a (1-&gt;4)-alpha-D-glucan chain to a primary hydroxy group in a similar glucan chain.. It participates in glycan biosynthesis; glycogen biosynthesis. Catalyzes the formation of the alpha-1,6-glucosidic linkages in glycogen by scission of a 1,4-alpha-linked oligosaccharide from growing alpha-1,4-glucan chains and the subsequent attachment of the oligosaccharide to the alpha-1,6 position. This Corynebacterium glutamicum (strain ATCC 13032 / DSM 20300 / JCM 1318 / BCRC 11384 / CCUG 27702 / LMG 3730 / NBRC 12168 / NCIMB 10025 / NRRL B-2784 / 534) protein is 1,4-alpha-glucan branching enzyme GlgB.